We begin with the raw amino-acid sequence, 383 residues long: Protein RecA (383 aa).

An ATP-binding site is contributed by 79-86 (GPESSGKT). Residues 347 to 369 (IEEDNTEEKQSSKEKETDEKADK) form a disordered region. The span at 353-369 (EEKQSSKEKETDEKADK) shows a compositional bias: basic and acidic residues.

The protein belongs to the RecA family.

It localises to the cytoplasm. In terms of biological role, can catalyze the hydrolysis of ATP in the presence of single-stranded DNA, the ATP-dependent uptake of single-stranded DNA by duplex DNA, and the ATP-dependent hybridization of homologous single-stranded DNAs. It interacts with LexA causing its activation and leading to its autocatalytic cleavage. The chain is Protein RecA from Streptococcus mutans serotype c (strain ATCC 700610 / UA159).